Consider the following 1012-residue polypeptide: Cellulose synthase-like protein D5 (1012 aa).

The disordered stretch occupies residues M1–K81. A compositionally biased stretch (low complexity) spans P20–G37. Residues G57–L69 are compositionally biased toward basic and acidic residues. 2 helical membrane passes run I150–V170 and A180–L200. Residue D280 is part of the active site. Residues P597 to D620 form a disordered region. Residues G606–G618 are compositionally biased toward gly residues. The active site involves D717. The next 6 helical transmembrane spans lie at L799–V819, T825–V845, L871–L891, S914–V934, L948–G968, and T978–I998.

Belongs to the glycosyltransferase 2 family. Plant cellulose synthase-like D subfamily.

Its subcellular location is the golgi apparatus membrane. Thought to be a Golgi-localized beta-glycan synthase that polymerize the backbones of noncellulosic polysaccharides (hemicelluloses) of plant cell wall. The chain is Cellulose synthase-like protein D5 (CSLD5) from Oryza sativa subsp. japonica (Rice).